A 251-amino-acid chain; its full sequence is 7-cyano-7-deazaguanine synthase (251 aa).

Residues 1 to 21 (MSDLPRHSPRRQHAGESAVTA) form a disordered region. 35 to 45 (YSGGMDSYTVL) contributes to the ATP binding site. Residues Cys212, Cys220, Cys223, and Cys226 each coordinate Zn(2+).

It belongs to the QueC family. It depends on Zn(2+) as a cofactor.

It catalyses the reaction 7-carboxy-7-deazaguanine + NH4(+) + ATP = 7-cyano-7-deazaguanine + ADP + phosphate + H2O + H(+). The protein operates within purine metabolism; 7-cyano-7-deazaguanine biosynthesis. In terms of biological role, catalyzes the ATP-dependent conversion of 7-carboxy-7-deazaguanine (CDG) to 7-cyano-7-deazaguanine (preQ(0)). In Chromohalobacter salexigens (strain ATCC BAA-138 / DSM 3043 / CIP 106854 / NCIMB 13768 / 1H11), this protein is 7-cyano-7-deazaguanine synthase.